A 126-amino-acid chain; its full sequence is Cystatin-like protein (126 aa).

Residues 72–76 (QVVAG) carry the Secondary area of contact motif. Cys-94 and Cys-115 are disulfide-bonded.

Belongs to the cystatin family.

The sequence is that of Cystatin-like protein (Cys) from Drosophila melanogaster (Fruit fly).